The primary structure comprises 253 residues: MDNRFATAFVIACVLSLISTIYMAASIGTDFWYEYRSPVQENSSDLNKSIWDEFISDEADEKTYNDALFRYNGTVGLWRRCITIPKNMHWYSPPERTESFDVVTKCVSFTLTEQFMEKFVDPGNHNSGIDLLRTYLWRCQFLLPFVSLGLMCFGALIGLCACICRSLYPTIATGILHLLAGLCTLGSVSCYVAGIELLHQKLELPDSVSGEFGWSFCLACVSAPLQFMASALFIWAAHTNRKEYTLMKAYRVA.

Residues 5-25 (FATAFVIACVLSLISTIYMAA) form a helical membrane-spanning segment. N-linked (GlcNAc...) asparagine glycosylation is found at N42 and N72. A run of 3 helical transmembrane segments spans residues 141–161 (FLLP…GLCA), 175–195 (ILHL…VAGI), and 216–236 (FCLA…FIWA).

Belongs to the PMP-22/EMP/MP20 family.

The protein localises to the cell junction. It localises to the tight junction. Its subcellular location is the cell membrane. Plays a role in negatively regulating the permeability of cells to small molecules. This chain is Claudin domain-containing protein 1 (CLDND1), found in Macaca fascicularis (Crab-eating macaque).